Here is a 309-residue protein sequence, read N- to C-terminus: CDK-activating kinase assembly factor MAT1 (309 aa).

N-acetylmethionine is present on methionine 1. An RING-type zinc finger spans residues 6 to 50; that stretch reads CPRCKTTKYRNPSLKLMVNVCGHTLCESCVDLLFVRGAGNCPECG. Threonine 51 is modified (phosphothreonine). The UIM domain occupies 142–161; it reads REQEELEEALEVERQEHEQR. Residue serine 279 is modified to Phosphoserine.

Associates primarily with CDK7 and cyclin H to form the CAK complex. CAK can further associate with the core-TFIIH to form the TFIIH basal transcription factor.

It is found in the nucleus. Its function is as follows. Stabilizes the cyclin H-CDK7 complex to form a functional CDK-activating kinase (CAK) enzymatic complex. CAK activates the cyclin-associated kinases CDK1, CDK2, CDK4 and CDK6 by threonine phosphorylation. CAK complexed to the core-TFIIH basal transcription factor activates RNA polymerase II by serine phosphorylation of the repetitive C-terminal domain (CTD) of its large subunit (POLR2A), allowing its escape from the promoter and elongation of the transcripts. Involved in cell cycle control and in RNA transcription by RNA polymerase II. The sequence is that of CDK-activating kinase assembly factor MAT1 (Mnat1) from Mus musculus (Mouse).